Here is a 529-residue protein sequence, read N- to C-terminus: tRNA pseudouridine synthase Pus10 (529 aa).

Positions 21 and 24 each coordinate Zn(2+). A coiled-coil region spans residues 42-89 (KELLNELQKFLETEKDELILEVMNPPPKKIRLQELEDSIDNLSQNGEG). 2 positions are modified to phosphoserine: Ser-79 and Ser-84. Positions 109 and 112 each coordinate Zn(2+). Positions 304-317 (TPWIIDGERKLESS) are RNA binding forefinger loop. Asp-344 serves as the catalytic Nucleophile. An RNA binding thumb loop region spans residues 442–457 (QKTPLRVLHRRPLAVR).

Belongs to the pseudouridine synthase Pus10 family. In terms of assembly, interacts with components of the microprocessor complex DROSHA and DGCR8. In terms of processing, proteolytically cleaved during TRAIL-induced cell death. Cleaved, in vitro, either by caspase-3 (CASP3) or caspase-8 (CASP8).

It localises to the nucleus. The protein resides in the cytoplasm. The protein localises to the mitochondrion. The enzyme catalyses uridine(55) in tRNA = pseudouridine(55) in tRNA. It catalyses the reaction uridine(54) in tRNA = pseudouridine(54) in tRNA. In terms of biological role, protein with different functions depending on its subcellular location: involved in miRNA processing in the nucleus and acts as a tRNA pseudouridylate synthase in the cytoplasm. In the cytoplasm, acts as a pseudouridylate synthase by catalyzing synthesis of pseudouridine(54) and pseudouridine(55) from uracil-54 and uracil-55, respectively, in the psi GC loop of a subset of tRNAs. tRNA pseudouridylate synthase activity is enhanced by the presence of 1-methyladenosine at position 53-61 of tRNAs. Does not show tRNA pseudouridylate synthase activity in the nucleus. In the nucleus, promotes primary microRNAs (pri-miRNAs) processing independently of its RNA pseudouridylate synthase activity. Binds pri-miRNAs. Modulator of TRAIL/TNFSF10-induced cell death via activation of procaspase-8 and BID cleavage. Required for the progression of the apoptotic signal through intrinsic mitochondrial cell death. This Homo sapiens (Human) protein is tRNA pseudouridine synthase Pus10.